The primary structure comprises 577 residues: Phosphoethanolamine transferase EptC (577 aa).

The next 5 helical transmembrane spans lie at 17-37 (LGWA…IIYI), 44-64 (NGIR…FLFP), 69-89 (IIAA…LCYY), 119-139 (YFSL…VLLW), and 154-174 (VVSF…NTFI).

Belongs to the phosphoethanolamine transferase family. EptC/CptA subfamily.

It is found in the cell inner membrane. It functions in the pathway bacterial outer membrane biogenesis; LPS core biosynthesis. In terms of biological role, catalyzes the addition of a phosphoethanolamine moiety to the outer membrane lipopolysaccharide core. Plays a role in the pathogenesis of E.coli meningitis. Required for invasion of E.coli K1 into brain microvascular endothelial cells (BMEC). Contributes to E.coli traversal across the blood-brain barrier. This chain is Phosphoethanolamine transferase EptC (eptC), found in Escherichia coli O18:K1:H7 (strain RS218 / NMEC).